Here is a 216-residue protein sequence, read N- to C-terminus: MPDITIALSKGRIFEDTIPFLKAAGIVPSDDPDTSRKLIIGTNRPDVRLVMVRATDVPTYVQYGAADLGVAGKDVLLEHDGIGLYQPLDLKIARCRMMVAVRDDYDYASAVFRGARLRVATKYVKTARNHFAAKGMHVDLIKLYGSMELAPLVDLADAIVDLVSTGSTLKANHLQAIEEIMPISARLIVNQAALKLKNTAIQPLLETFSAAVPKNL.

The protein belongs to the ATP phosphoribosyltransferase family. Short subfamily. Heteromultimer composed of HisG and HisZ subunits.

It localises to the cytoplasm. It carries out the reaction 1-(5-phospho-beta-D-ribosyl)-ATP + diphosphate = 5-phospho-alpha-D-ribose 1-diphosphate + ATP. It functions in the pathway amino-acid biosynthesis; L-histidine biosynthesis; L-histidine from 5-phospho-alpha-D-ribose 1-diphosphate: step 1/9. Catalyzes the condensation of ATP and 5-phosphoribose 1-diphosphate to form N'-(5'-phosphoribosyl)-ATP (PR-ATP). Has a crucial role in the pathway because the rate of histidine biosynthesis seems to be controlled primarily by regulation of HisG enzymatic activity. The chain is ATP phosphoribosyltransferase from Nitrosomonas europaea (strain ATCC 19718 / CIP 103999 / KCTC 2705 / NBRC 14298).